Reading from the N-terminus, the 175-residue chain is METWRKGSFRNASFFKRITLGRPRRLHRQGSILSQASTAGGDHEEYSNREVIRELQGRPDGRRLPLWGDEHPRATLLAPPKPPRLYRESSSCPNILEPPASYTAGYSATLPSAISLTGPLHQCSEEALSDTPHFPRTPTPDLSDPFLSFKVDLGLSLLEEVLQILKEQFPSEPHF.

Residues 1-11 (METWRKGSFRN) constitute a mitochondrion transit peptide. The interval 29 to 48 (QGSILSQASTAGGDHEEYSN) is disordered.

The protein localises to the mitochondrion. This is an uncharacterized protein from Mus musculus (Mouse).